We begin with the raw amino-acid sequence, 556 residues long: 3-phosphoinositide-dependent protein kinase 1 (556 aa).

At Tyr-9 the chain carries Phosphotyrosine; by SRC and INSR. Ser-25 is modified (phosphoserine). Positions 26-80 (PSMVRTQTESSTPPGIPGGSRQGPAMDGTAAEPRPGAGSLQHAQPPPQPRKKRPE) are disordered. The segment covering 28 to 38 (MVRTQTESSTP) has biased composition (polar residues). The Protein kinase domain maps to 82 to 342 (FKFGKILGEG…YGPLKAHPFF (261 aa)). ATP contacts are provided by residues 92-94 (SFS) and Lys-111. Residues 113–157 (LEKRHIIKENKVPYVTRERDVMSRLDHPFFVKLYFTFQDDEKLYF) are PIF-pocket. ATP is bound by residues 160–162 (SYA) and Glu-166. Residue Asp-205 is the Proton acceptor of the active site. 2 residues coordinate ATP: Glu-209 and Asp-223. Ser-241 is modified (phosphoserine; by autocatalysis). Residue Lys-304 is modified to N6-acetyllysine. The residue at position 354 (Thr-354) is a Phosphothreonine; by MELK. Phosphotyrosine; by SRC and INSR occurs at positions 373 and 376. Ser-393 is modified (phosphoserine). Ser-394 carries the phosphoserine; by MAP3K5 modification. Ser-396 bears the Phosphoserine mark. Ser-398 is modified (phosphoserine; by MAP3K5). Ser-410 carries the phosphoserine modification. One can recognise a PH domain in the interval 459-550 (KMGPVDKRKG…EVWRQRYQSH (92 aa)). Ser-501 carries the phosphoserine; by PKC/PRKCQ modification. The residue at position 513 (Thr-513) is a Phosphothreonine; by autocatalysis. Phosphoserine; by PKC/PRKCQ is present on Ser-529.

Belongs to the protein kinase superfamily. AGC Ser/Thr protein kinase family. PDPK1 subfamily. In terms of assembly, homodimer in its autoinhibited state. Active as monomer. Interacts with NPRL2, PPARG, PAK1, PTK2B, GRB14, PKN1 (via C-terminus), STRAP and IKKB. The Tyr-9 phosphorylated form interacts with SRC, RASA1 and CRK (via their SH2 domains). Interacts with SGK3 in a phosphorylation-dependent manner. The tyrosine-phosphorylated form interacts with PTPN6. The Ser-241 phosphorylated form interacts with YWHAH and YWHAQ. Binds INSR in response to insulin. Interacts (via PH domain) with SMAD3, SMAD4 and SMAD7. Interacts with PKN2; the interaction stimulates PDPK1 autophosphorylation, its PI(3,4,5)P3-dependent kinase activity toward 'Ser-473' of AKT1 but also activates its kinase activity toward PRKCD and PRKCZ. In terms of processing, phosphorylation on Ser-241 in the activation loop is required for full activity. PDPK1 itself can autophosphorylate Ser-241, leading to its own activation. Autophosphorylation is inhibited by the apoptotic C-terminus cleavage product of PKN2. Tyr-9 phosphorylation is critical for stabilization of both PDPK1 and the PDPK1/SRC complex via HSP90-mediated protection of PDPK1 degradation. Angiotensin II stimulates the tyrosine phosphorylation of PDPK1 in vascular smooth muscle in a calcium- and SRC-dependent manner. Phosphorylated on Tyr-9, Tyr-373 and Tyr-376 by INSR in response to insulin. Palmitate negatively regulates autophosphorylation at Ser-241 and palmitate-induced phosphorylation at Ser-529 and Ser-501 by PKC/PRKCQ negatively regulates its ability to phosphorylate PKB/AKT1. Phosphorylation at Thr-354 by MELK partially inhibits kinase activity, the inhibition is cooperatively enhanced by phosphorylation at Ser-394 and Ser-398 by MAP3K5. Autophosphorylated; autophosphorylation is inhibited by the apoptotic C-terminus cleavage product of PKN2. Post-translationally, monoubiquitinated in the kinase domain, deubiquitinated by USP4. In terms of tissue distribution, appears to be expressed ubiquitously. The Tyr-9 phosphorylated form is markedly increased in diseased tissue compared with normal tissue from lung, liver, colon and breast.

It localises to the cytoplasm. The protein localises to the nucleus. The protein resides in the cell membrane. It is found in the cell junction. Its subcellular location is the focal adhesion. The enzyme catalyses L-seryl-[protein] + ATP = O-phospho-L-seryl-[protein] + ADP + H(+). It carries out the reaction L-threonyl-[protein] + ATP = O-phospho-L-threonyl-[protein] + ADP + H(+). Homodimerization regulates its activity by maintaining the kinase in an autoinhibitory conformation. NPRL2 down-regulates its activity by interfering with tyrosine phosphorylation at the Tyr-9, Tyr-373 and Tyr-376 residues. The 14-3-3 protein YWHAQ acts as a negative regulator by association with the residues surrounding the Ser-241 residue. STRAP positively regulates its activity by enhancing its autophosphorylation and by stimulating its dissociation from YWHAQ. SMAD2, SMAD3, SMAD4 and SMAD7 also positively regulate its activity by stimulating its dissociation from YWHAQ. Activated by phosphorylation on Tyr-9, Tyr-373 and Tyr-376 by INSR in response to insulin. Functionally, serine/threonine kinase which acts as a master kinase, phosphorylating and activating a subgroup of the AGC family of protein kinases. Its targets include: protein kinase B (PKB/AKT1, PKB/AKT2, PKB/AKT3), p70 ribosomal protein S6 kinase (RPS6KB1), p90 ribosomal protein S6 kinase (RPS6KA1, RPS6KA2 and RPS6KA3), cyclic AMP-dependent protein kinase (PRKACA), protein kinase C (PRKCD and PRKCZ), serum and glucocorticoid-inducible kinase (SGK1, SGK2 and SGK3), p21-activated kinase-1 (PAK1), TSSK3, protein kinase PKN (PKN1 and PKN2). Plays a central role in the transduction of signals from insulin by providing the activating phosphorylation to PKB/AKT1, thus propagating the signal to downstream targets controlling cell proliferation and survival, as well as glucose and amino acid uptake and storage. Negatively regulates the TGF-beta-induced signaling by: modulating the association of SMAD3 and SMAD7 with TGF-beta receptor, phosphorylating SMAD2, SMAD3, SMAD4 and SMAD7, preventing the nuclear translocation of SMAD3 and SMAD4 and the translocation of SMAD7 from the nucleus to the cytoplasm in response to TGF-beta. Activates PPARG transcriptional activity and promotes adipocyte differentiation. Activates the NF-kappa-B pathway via phosphorylation of IKKB. The tyrosine phosphorylated form is crucial for the regulation of focal adhesions by angiotensin II. Controls proliferation, survival, and growth of developing pancreatic cells. Participates in the regulation of Ca(2+) entry and Ca(2+)-activated K(+) channels of mast cells. Essential for the motility of vascular endothelial cells (ECs) and is involved in the regulation of their chemotaxis. Plays a critical role in cardiac homeostasis by serving as a dual effector for cell survival and beta-adrenergic response. Plays an important role during thymocyte development by regulating the expression of key nutrient receptors on the surface of pre-T cells and mediating Notch-induced cell growth and proliferative responses. Provides negative feedback inhibition to toll-like receptor-mediated NF-kappa-B activation in macrophages. In terms of biological role, catalytically inactive. This chain is 3-phosphoinositide-dependent protein kinase 1 (PDPK1), found in Homo sapiens (Human).